The sequence spans 375 residues: MSEITHRTKTRPVKVGPLTIGGNNEVVIQSMTTTKTHDVEATVAEINRLAEAGCQIVRVACPDERAANAIADIKKQISIPLVVDIHFDYKLALKAIEGGADKIRINPGNIGRREKVEAVVKAAKEKGIPIRIGVNAGSLEKRILEKYGYPTADGMVESALHHIKILEDLDFHDIIVSMKASDVNLAIEAYEKASKAFDYPLHLGITESGTLFAGTVKSAAGLGAILSKGIGNTLRISLSADPVEEVKVARELLKSFGLASNAATLISCPTCGRIEIDLISIANEVEEYISKVKAPIKVAVLGCAVNGPGEAREADIGIAGARGEGLLFRKGQIVRKVPEETMVEELKKEIDKLAEEHYAKLEAEKAKAEQETQKA.

4 residues coordinate [4Fe-4S] cluster: Cys268, Cys271, Cys303, and Glu310.

It belongs to the IspG family. It depends on [4Fe-4S] cluster as a cofactor.

It catalyses the reaction (2E)-4-hydroxy-3-methylbut-2-enyl diphosphate + oxidized [flavodoxin] + H2O + 2 H(+) = 2-C-methyl-D-erythritol 2,4-cyclic diphosphate + reduced [flavodoxin]. It functions in the pathway isoprenoid biosynthesis; isopentenyl diphosphate biosynthesis via DXP pathway; isopentenyl diphosphate from 1-deoxy-D-xylulose 5-phosphate: step 5/6. Functionally, converts 2C-methyl-D-erythritol 2,4-cyclodiphosphate (ME-2,4cPP) into 1-hydroxy-2-methyl-2-(E)-butenyl 4-diphosphate. In Bacillus velezensis (strain DSM 23117 / BGSC 10A6 / LMG 26770 / FZB42) (Bacillus amyloliquefaciens subsp. plantarum), this protein is 4-hydroxy-3-methylbut-2-en-1-yl diphosphate synthase (flavodoxin).